Here is a 440-residue protein sequence, read N- to C-terminus: MSVFKASFLFLLSSSLVHGVPHSSRASRSQQCVVPSKYQASNGMADDSVAVSQAFAQCATDSVIIFEEGVNYNIFQPITATNLSNVEIRMHGNLHLPQNITAVQNIVSDGTSTWFTLEGPKVDWIGPEDVNNGWIDSYGQPWWDANPAGSSGIDNRPHLMSFKSSQATMKYFRSRKPIAWNVKLHGQDITVSHAIIDATSTGSFPFNTDGFDVEGTNIQITDSIMYNGDDAIAVGADSHDTLFTRNTIGYQTHGMSIGSLGKDPTDFANISNIRFDDVTVVDGLYAARFKSWSGGTGLVKNVTWNNIRVFNVTFPIFVTQSYSDQGASRSGTVNASSAVMMEDFTWSDFAGSINTYQPGDGSCVSDPCWYNVGLPNLKHTEALIIECHTAQSCKNFVTDNIQLYPQVLEPASVICMNATAALNPDLGFTCKNGTYSPLSN.

An N-terminal signal peptide occupies residues 1-19; sequence MSVFKASFLFLLSSSLVHG. 2 N-linked (GlcNAc...) asparagine glycosylation sites follow: N82 and N99. PbH1 repeat units lie at residues 215–236, 238–259, and 265–288; these read GTNIQITDSIMYNGDDAIAVGA, SHDTLFTRNTIGYQTHGMSIGS, and TDFANISNIRFDDVTVVDGLYAAR. Residue D229 is the Proton donor of the active site. H253 is an active-site residue. N269, N301, N311, and N334 each carry an N-linked (GlcNAc...) asparagine glycan. A disulfide bond links C387 and C393. N-linked (GlcNAc...) asparagine glycosylation is found at N417 and N432.

The protein belongs to the glycosyl hydrolase 28 family.

It is found in the secreted. It carries out the reaction [(1-&gt;4)-alpha-D-galacturonosyl](n) + H2O = alpha-D-galacturonate + [(1-&gt;4)-alpha-D-galacturonosyl](n-1). Specific in hydrolyzing the terminal glycosidic bond of polygalacturonic acid and oligogalacturonates. The chain is Probable exopolygalacturonase C (pgxC) from Aspergillus niger (strain ATCC MYA-4892 / CBS 513.88 / FGSC A1513).